We begin with the raw amino-acid sequence, 242 residues long: Pyridoxine 5'-phosphate synthase (242 aa).

Asparagine 6 contacts 3-amino-2-oxopropyl phosphate. 8 to 9 (DH) contacts 1-deoxy-D-xylulose 5-phosphate. Arginine 17 serves as a coordination point for 3-amino-2-oxopropyl phosphate. Histidine 42 (proton acceptor) is an active-site residue. Residues arginine 44 and histidine 49 each coordinate 1-deoxy-D-xylulose 5-phosphate. Glutamate 69 functions as the Proton acceptor in the catalytic mechanism. Threonine 99 is a binding site for 1-deoxy-D-xylulose 5-phosphate. Histidine 190 serves as the catalytic Proton donor. Residues glycine 191 and 212 to 213 (GH) each bind 3-amino-2-oxopropyl phosphate.

The protein belongs to the PNP synthase family. As to quaternary structure, homooctamer; tetramer of dimers.

The protein localises to the cytoplasm. It carries out the reaction 3-amino-2-oxopropyl phosphate + 1-deoxy-D-xylulose 5-phosphate = pyridoxine 5'-phosphate + phosphate + 2 H2O + H(+). Its pathway is cofactor biosynthesis; pyridoxine 5'-phosphate biosynthesis; pyridoxine 5'-phosphate from D-erythrose 4-phosphate: step 5/5. Its function is as follows. Catalyzes the complicated ring closure reaction between the two acyclic compounds 1-deoxy-D-xylulose-5-phosphate (DXP) and 3-amino-2-oxopropyl phosphate (1-amino-acetone-3-phosphate or AAP) to form pyridoxine 5'-phosphate (PNP) and inorganic phosphate. This is Pyridoxine 5'-phosphate synthase from Neisseria meningitidis serogroup C.